A 311-amino-acid chain; its full sequence is Methionyl-tRNA formyltransferase (311 aa).

109-112 (SLLP) is a (6S)-5,6,7,8-tetrahydrofolate binding site.

The protein belongs to the Fmt family.

The enzyme catalyses L-methionyl-tRNA(fMet) + (6R)-10-formyltetrahydrofolate = N-formyl-L-methionyl-tRNA(fMet) + (6S)-5,6,7,8-tetrahydrofolate + H(+). Functionally, attaches a formyl group to the free amino group of methionyl-tRNA(fMet). The formyl group appears to play a dual role in the initiator identity of N-formylmethionyl-tRNA by promoting its recognition by IF2 and preventing the misappropriation of this tRNA by the elongation apparatus. The polypeptide is Methionyl-tRNA formyltransferase (Staphylococcus aureus (strain bovine RF122 / ET3-1)).